The following is a 655-amino-acid chain: p-hydroxybenzoic acid efflux pump subunit AaeB (655 aa).

Residues 1-12 (MDIFSIANQHIR) lie on the Periplasmic side of the membrane. The chain crosses the membrane as a helical span at residues 13–33 (FAVKLATAIVLALFVGFHFQL). At 34-37 (ETPR) the chain is on the cytoplasmic side. Residues 38 to 58 (WAVLTAAIVAAGPAFAAGGEP) form a helical membrane-spanning segment. The Periplasmic portion of the chain corresponds to 59-68 (YSGAIRYRGF). The helical transmembrane segment at 69–89 (LRIIGTFIGCIAGLVIIIAMI) threads the bilayer. Topologically, residues 90-92 (RAP) are cytoplasmic. Residues 93–113 (LLMILVCCIWAGFCTWISSLV) form a helical membrane-spanning segment. Residues 114-120 (RIENSYA) lie on the Periplasmic side of the membrane. Residues 121–141 (WGLAGYTALIIVITIQPEPLL) form a helical membrane-spanning segment. At 142-151 (TPQFAVERCS) the chain is on the cytoplasmic side. The chain crosses the membrane as a helical span at residues 152–172 (EIVIGIVCAIMADLLFSPRSI). At 173 to 369 (KQEVDRELES…RTTLSCILGT (197 aa)) the chain is on the periplasmic side. Residues 370–390 (LFWLWTGWTSGSGAMVMIAVV) traverse the membrane as a helical segment. The Cytoplasmic portion of the chain corresponds to 391–406 (TSLAMRLPNPRMVAID). Residues 407-427 (FIYGTLAALPLGLLYFLVIIP) traverse the membrane as a helical segment. The Periplasmic segment spans residues 428-430 (NTQ). A helical transmembrane segment spans residues 431–451 (QSMLLLCISLAVLGFFLGIEV). Topologically, residues 452 to 458 (QKRRLGS) are cytoplasmic. The chain crosses the membrane as a helical span at residues 459 to 479 (MGALASTINIIVLDNPMTFHF). At 480–481 (SQ) the chain is on the periplasmic side. Residues 482-502 (FLDSALGQIVGCVLAFTVILL) traverse the membrane as a helical segment. The Cytoplasmic portion of the chain corresponds to 503-655 (VRDKSRDRTG…HKYQHALTDS (153 aa)).

The protein belongs to the aromatic acid exporter ArAE (TC 2.A.85) family.

The protein localises to the cell inner membrane. Forms an efflux pump with AaeA. Could function as a metabolic relief valve, allowing to eliminate certain compounds when they accumulate to high levels in the cell. The polypeptide is p-hydroxybenzoic acid efflux pump subunit AaeB (Escherichia coli O157:H7).